Consider the following 96-residue polypeptide: Protein Vpr (96 aa).

The homooligomerization stretch occupies residues methionine 1–leucine 42. Serine 79, serine 94, and serine 96 each carry phosphoserine; by host.

This sequence belongs to the HIV-1 VPR protein family. Homooligomer, may form homodimer. Interacts with p6-gag region of the Pr55 Gag precursor protein through a (Leu-X-X)4 motif near the C-terminus of the P6gag protein. Interacts with host UNG. May interact with host RAD23A/HHR23A. Interacts with host VPRBP/DCAF1, leading to hijack the CUL4A-RBX1-DDB1-DCAF1/VPRBP complex, mediating ubiquitination of host proteins such as TERT and ZGPAT and arrest of the cell cycle in G2 phase. Post-translationally, phosphorylated on several residues by host. These phosphorylations regulate VPR activity for the nuclear import of the HIV-1 pre-integration complex.

It localises to the virion. The protein localises to the host nucleus. The protein resides in the host extracellular space. Functionally, during virus replication, may deplete host UNG protein, and incude G2-M cell cycle arrest. Acts by targeting specific host proteins for degradation by the 26S proteasome, through association with the cellular CUL4A-DDB1 E3 ligase complex by direct interaction with host VPRPB/DCAF-1. Cell cycle arrest reportedly occurs within hours of infection and is not blocked by antiviral agents, suggesting that it is initiated by the VPR carried into the virion. Additionally, VPR induces apoptosis in a cell cycle dependent manner suggesting that these two effects are mechanistically linked. Detected in the serum and cerebrospinal fluid of AIDS patient, VPR may also induce cell death to bystander cells. Its function is as follows. During virus entry, plays a role in the transport of the viral pre-integration (PIC) complex to the host nucleus. This function is crucial for viral infection of non-dividing macrophages. May act directly at the nuclear pore complex, by binding nucleoporins phenylalanine-glycine (FG)-repeat regions. The sequence is that of Protein Vpr from Human immunodeficiency virus type 1 group M subtype B (isolate SF33) (HIV-1).